A 176-amino-acid polypeptide reads, in one-letter code: uncharacterized protein (176 aa).

Residues 15-28 (TSSNPPASASQSTG) are compositionally biased toward polar residues. Disordered regions lie at residues 15 to 100 (TSSN…TSAG) and 125 to 176 (ASLR…NLGA). The span at 43–52 (FIDKVTDKPS) shows a compositional bias: basic and acidic residues.

This is an uncharacterized protein from Homo sapiens (Human).